The following is a 315-amino-acid chain: Homoserine kinase (315 aa).

Residue Pro-97–Thr-107 participates in ATP binding.

Belongs to the GHMP kinase family. Homoserine kinase subfamily.

It is found in the cytoplasm. It carries out the reaction L-homoserine + ATP = O-phospho-L-homoserine + ADP + H(+). The protein operates within amino-acid biosynthesis; L-threonine biosynthesis; L-threonine from L-aspartate: step 4/5. Catalyzes the ATP-dependent phosphorylation of L-homoserine to L-homoserine phosphate. The chain is Homoserine kinase from Synechococcus sp. (strain CC9902).